The chain runs to 556 residues: Potassium-transporting ATPase potassium-binding subunit (556 aa).

The next 10 membrane-spanning stretches (helical) occupy residues 6 to 26 (AGLI…VPLG), 65 to 85 (GVLA…LVQG), 133 to 153 (GLAV…VALV), 176 to 196 (LRIL…GGAI), 249 to 269 (PTAW…FSLP), 283 to 303 (YAIA…MLWF), 378 to 398 (GLYG…LMVG), 419 to 439 (YFLV…ALPG), 483 to 503 (ALGL…LALA), and 526 to 546 (FVGM…LPML).

The protein belongs to the KdpA family. The system is composed of three essential subunits: KdpA, KdpB and KdpC.

It is found in the cell membrane. Functionally, part of the high-affinity ATP-driven potassium transport (or Kdp) system, which catalyzes the hydrolysis of ATP coupled with the electrogenic transport of potassium into the cytoplasm. This subunit binds the extracellular potassium ions and delivers the ions to the membrane domain of KdpB through an intramembrane tunnel. In Mycobacterium avium (strain 104), this protein is Potassium-transporting ATPase potassium-binding subunit.